Consider the following 301-residue polypeptide: Large ribosomal subunit protein uL18y (301 aa).

The tract at residues 247–267 is disordered; sequence RAEPNHKKTEKSAPKEHKRYN. Residues 249–261 show a composition bias toward basic and acidic residues; the sequence is EPNHKKTEKSAPK.

It belongs to the universal ribosomal protein uL18 family. As to quaternary structure, component of the large ribosomal subunit (LSU).

It localises to the cytoplasm. Its subcellular location is the nucleus. The protein resides in the nucleolus. It is found in the nucleoplasm. Functionally, component of the ribosome, a large ribonucleoprotein complex responsible for the synthesis of proteins in the cell. The small ribosomal subunit (SSU) binds messenger RNAs (mRNAs) and translates the encoded message by selecting cognate aminoacyl-transfer RNA (tRNA) molecules. The large subunit (LSU) contains the ribosomal catalytic site termed the peptidyl transferase center (PTC), which catalyzes the formation of peptide bonds, thereby polymerizing the amino acids delivered by tRNAs into a polypeptide chain. The nascent polypeptides leave the ribosome through a tunnel in the LSU and interact with protein factors that function in enzymatic processing, targeting, and the membrane insertion of nascent chains at the exit of the ribosomal tunnel. Seems involved in the regulation of cell proliferation. Essential in leaf polarity establishment, probably having a role for translation in leaf dorsoventral patterning to specify leaf adaxial identity. The sequence is that of Large ribosomal subunit protein uL18y from Arabidopsis thaliana (Mouse-ear cress).